The chain runs to 96 residues: UPF0235 protein ESA_00387 (96 aa).

Belongs to the UPF0235 family.

The polypeptide is UPF0235 protein ESA_00387 (Cronobacter sakazakii (strain ATCC BAA-894) (Enterobacter sakazakii)).